The primary structure comprises 249 residues: Homeobox protein TGIF2LX (249 aa).

Disordered stretches follow at residues Met-1–Gly-62 and Asp-126–Val-192. Over residues Ala-9–Pro-27 the composition is skewed to basic and acidic residues. Over residues Ala-28–Asp-46 the composition is skewed to polar residues. The homeobox; TALE-type DNA-binding region spans Glu-55 to Asp-118. The span at Asp-159–Gly-172 shows a compositional bias: polar residues.

The protein belongs to the TALE/TGIF homeobox family.

The protein localises to the nucleus. May have a transcription role in testis. This is Homeobox protein TGIF2LX (TGIF2LX) from Macaca fascicularis (Crab-eating macaque).